Here is a 477-residue protein sequence, read N- to C-terminus: Protoporphyrinogen oxidase (477 aa).

FAD contacts are provided by residues 9-14, 34-35, W42, 57-60, V257, A449, and 454-456; these read GGGISG, ES, GPRG, and VAV.

The protein belongs to the protoporphyrinogen/coproporphyrinogen oxidase family. Protoporphyrinogen oxidase subfamily. As to quaternary structure, monomer. Homodimer. The cofactor is FAD. In terms of tissue distribution, expressed in heart, brain, placenta, lung, liver, skeletal muscle, kidney and pancreas.

Its subcellular location is the mitochondrion inner membrane. The catalysed reaction is protoporphyrinogen IX + 3 O2 = protoporphyrin IX + 3 H2O2. It participates in porphyrin-containing compound metabolism; protoporphyrin-IX biosynthesis; protoporphyrin-IX from protoporphyrinogen-IX: step 1/1. Its function is as follows. Catalyzes the 6-electron oxidation of protoporphyrinogen-IX to form protoporphyrin-IX. In Homo sapiens (Human), this protein is Protoporphyrinogen oxidase (PPOX).